A 94-amino-acid chain; its full sequence is Pyrimidine/purine nucleoside phosphorylase (94 aa).

It belongs to the nucleoside phosphorylase PpnP family.

It carries out the reaction a purine D-ribonucleoside + phosphate = a purine nucleobase + alpha-D-ribose 1-phosphate. It catalyses the reaction adenosine + phosphate = alpha-D-ribose 1-phosphate + adenine. The enzyme catalyses cytidine + phosphate = cytosine + alpha-D-ribose 1-phosphate. The catalysed reaction is guanosine + phosphate = alpha-D-ribose 1-phosphate + guanine. It carries out the reaction inosine + phosphate = alpha-D-ribose 1-phosphate + hypoxanthine. It catalyses the reaction thymidine + phosphate = 2-deoxy-alpha-D-ribose 1-phosphate + thymine. The enzyme catalyses uridine + phosphate = alpha-D-ribose 1-phosphate + uracil. The catalysed reaction is xanthosine + phosphate = alpha-D-ribose 1-phosphate + xanthine. Its function is as follows. Catalyzes the phosphorolysis of diverse nucleosides, yielding D-ribose 1-phosphate and the respective free bases. Can use uridine, adenosine, guanosine, cytidine, thymidine, inosine and xanthosine as substrates. Also catalyzes the reverse reactions. The protein is Pyrimidine/purine nucleoside phosphorylase of Salmonella heidelberg (strain SL476).